Here is a 104-residue protein sequence, read N- to C-terminus: Integration host factor subunit beta (104 aa).

It belongs to the bacterial histone-like protein family. As to quaternary structure, heterodimer of an alpha and a beta chain.

Its function is as follows. This protein is one of the two subunits of integration host factor, a specific DNA-binding protein that functions in genetic recombination as well as in transcriptional and translational control. In Xylella fastidiosa (strain M23), this protein is Integration host factor subunit beta.